The primary structure comprises 164 residues: S-ribosylhomocysteine lyase (164 aa).

Residues H61, H65, and C131 each contribute to the Fe cation site.

It belongs to the LuxS family. In terms of assembly, homodimer. Fe cation is required as a cofactor.

It catalyses the reaction S-(5-deoxy-D-ribos-5-yl)-L-homocysteine = (S)-4,5-dihydroxypentane-2,3-dione + L-homocysteine. In terms of biological role, involved in the synthesis of autoinducer 2 (AI-2) which is secreted by bacteria and is used to communicate both the cell density and the metabolic potential of the environment. The regulation of gene expression in response to changes in cell density is called quorum sensing. Catalyzes the transformation of S-ribosylhomocysteine (RHC) to homocysteine (HC) and 4,5-dihydroxy-2,3-pentadione (DPD). The protein is S-ribosylhomocysteine lyase of Bifidobacterium longum (strain NCC 2705).